Consider the following 601-residue polypeptide: Deuterosome assembly protein 1 (601 aa).

Coiled coils occupy residues 14 to 59 (CEAE…NAQT), 86 to 196 (TQNY…GKKQ), and 226 to 277 (IEKL…ELQS). The disordered stretch occupies residues 305-329 (AQDNRKRVESSYSPSPKEAERKRKE). Positions 354 to 397 (EEGLCSEQERLRSEISELTQELHQKEVTIATVMKKAALLERQLK) form a coiled coil. At serine 544 the chain carries Phosphoserine. The stretch at 555 to 586 (AAQHFLMEEERRAKELEKLLNTHIDELQRHTE) forms a coiled coil.

The protein belongs to the CEP63 family. In terms of assembly, interacts with CEP152; the interaction is mutually exclusive with CEP63. In terms of tissue distribution, highly enriched in multicilia-abundant tissues (trachea and oviduct).

Its subcellular location is the cytoplasm. In terms of biological role, key structural component of the deuterosome, a structure that promotes de novo centriole amplification in multiciliated cells. Deuterosome-mediated centriole amplification occurs in terminally differentiated multiciliated cells and can generate more than 100 centrioles. Probably sufficient for the specification and formation of the deuterosome inner core. Interacts with CEP152 and recruits PLK4 to activate centriole biogenesis. The protein is Deuterosome assembly protein 1 of Mus musculus (Mouse).